Consider the following 464-residue polypeptide: Putative guanine nucleotide-binding protein subunit alpha (464 aa).

Positions H33–K415 constitute a G-alpha domain. A G1 motif region spans residues L36–T49. Residues G41–S48, D147–Q151, L214–T220, D239–Q243, R268–D271, and T310–S313 each bind GTP. S48 serves as a coordination point for Mg(2+). The segment at D212–T220 is G2 motif. T220 is a binding site for Mg(2+). The segment at F235 to R244 is G3 motif. The G4 motif stretch occupies residues V306 to S313. A G5 motif region spans residues G382–C387.

The protein in the N-terminal section; belongs to the G-alpha family. In the C-terminal section; belongs to the class-II aminoacyl-tRNA synthetase family. G proteins are composed of 3 units; alpha, beta and gamma. The alpha chain contains the guanine nucleotide binding site.

Its function is as follows. Guanine nucleotide-binding proteins (G proteins) are involved as modulators or transducers in various transmembrane signaling systems. The protein is Putative guanine nucleotide-binding protein subunit alpha of Leishmania donovani.